The sequence spans 363 residues: Putative lipoate-protein ligase A (363 aa).

Residues 49 to 229 enclose the BPL/LPL catalytic domain; the sequence is STAKHCLLLY…CFLLHKSHST (181 aa). ATP contacts are provided by residues Arg91, 96–99, and Lys152; that span reads GTVF. Lys152 provides a ligand contact to (R)-lipoate.

It belongs to the LplA family. Monomer.

It localises to the cytoplasm. It catalyses the reaction L-lysyl-[lipoyl-carrier protein] + (R)-lipoate + ATP = N(6)-[(R)-lipoyl]-L-lysyl-[lipoyl-carrier protein] + AMP + diphosphate + H(+). Its pathway is protein modification; protein lipoylation via exogenous pathway; protein N(6)-(lipoyl)lysine from lipoate: step 1/2. It participates in protein modification; protein lipoylation via exogenous pathway; protein N(6)-(lipoyl)lysine from lipoate: step 2/2. In terms of biological role, catalyzes both the ATP-dependent activation of exogenously supplied lipoate to lipoyl-AMP and the transfer of the activated lipoyl onto the lipoyl domains of lipoate-dependent enzymes. This chain is Putative lipoate-protein ligase A (aim22), found in Schizosaccharomyces pombe (strain 972 / ATCC 24843) (Fission yeast).